A 95-amino-acid chain; its full sequence is Aspartyl/glutamyl-tRNA(Asn/Gln) amidotransferase subunit C (95 aa).

Belongs to the GatC family. In terms of assembly, heterotrimer of A, B and C subunits.

The enzyme catalyses L-glutamyl-tRNA(Gln) + L-glutamine + ATP + H2O = L-glutaminyl-tRNA(Gln) + L-glutamate + ADP + phosphate + H(+). It carries out the reaction L-aspartyl-tRNA(Asn) + L-glutamine + ATP + H2O = L-asparaginyl-tRNA(Asn) + L-glutamate + ADP + phosphate + 2 H(+). Functionally, allows the formation of correctly charged Asn-tRNA(Asn) or Gln-tRNA(Gln) through the transamidation of misacylated Asp-tRNA(Asn) or Glu-tRNA(Gln) in organisms which lack either or both of asparaginyl-tRNA or glutaminyl-tRNA synthetases. The reaction takes place in the presence of glutamine and ATP through an activated phospho-Asp-tRNA(Asn) or phospho-Glu-tRNA(Gln). This Pseudomonas fluorescens (strain SBW25) protein is Aspartyl/glutamyl-tRNA(Asn/Gln) amidotransferase subunit C.